Reading from the N-terminus, the 122-residue chain is Large ribosomal subunit protein bL20 (122 aa).

Belongs to the bacterial ribosomal protein bL20 family.

In terms of biological role, binds directly to 23S ribosomal RNA and is necessary for the in vitro assembly process of the 50S ribosomal subunit. It is not involved in the protein synthesizing functions of that subunit. This is Large ribosomal subunit protein bL20 (rplT) from Treponema pallidum (strain Nichols).